Consider the following 189-residue polypeptide: Elongation factor P (189 aa).

Lys34 is subject to N6-(3,6-diaminohexanoyl)-5-hydroxylysine.

The protein belongs to the elongation factor P family. May be beta-lysylated on the epsilon-amino group of Lys-34 by the combined action of EpmA and EpmB, and then hydroxylated on the C5 position of the same residue by EpmC (if this protein is present). Lysylation is critical for the stimulatory effect of EF-P on peptide-bond formation. The lysylation moiety may extend toward the peptidyltransferase center and stabilize the terminal 3-CCA end of the tRNA. Hydroxylation of the C5 position on Lys-34 may allow additional potential stabilizing hydrogen-bond interactions with the P-tRNA.

The protein localises to the cytoplasm. Its pathway is protein biosynthesis; polypeptide chain elongation. Functionally, involved in peptide bond synthesis. Alleviates ribosome stalling that occurs when 3 or more consecutive Pro residues or the sequence PPG is present in a protein, possibly by augmenting the peptidyl transferase activity of the ribosome. Modification of Lys-34 is required for alleviation. In Francisella tularensis subsp. novicida (strain U112), this protein is Elongation factor P.